The following is a 328-amino-acid chain: Glucokinase (328 aa).

16–21 (ADIGGT) contributes to the ATP binding site.

This sequence belongs to the bacterial glucokinase family.

Its subcellular location is the cytoplasm. It carries out the reaction D-glucose + ATP = D-glucose 6-phosphate + ADP + H(+). In Neisseria gonorrhoeae (strain ATCC 700825 / FA 1090), this protein is Glucokinase.